Reading from the N-terminus, the 342-residue chain is Holliday junction branch migration complex subunit RuvB (342 aa).

Residues 1-179 are large ATPase domain (RuvB-L); sequence MTNILSPEKS…FGIPMRLNFY (179 aa). ATP is bound by residues Ile18, Arg19, Gly60, Lys63, Thr64, Thr65, 126–128, Arg169, Tyr179, and Arg216; that span reads EDF. Thr64 lines the Mg(2+) pocket. The tract at residues 180 to 250 is small ATPAse domain (RuvB-S); it reads NTEELKKVLN…VSDFGLNRLE (71 aa). Residues 253–342 form a head domain (RuvB-H) region; it reads RIGLDSNDYR…HQFNIFNENE (90 aa). DNA-binding residues include Arg289, Arg308, and Arg313.

Belongs to the RuvB family. As to quaternary structure, homohexamer. Forms an RuvA(8)-RuvB(12)-Holliday junction (HJ) complex. HJ DNA is sandwiched between 2 RuvA tetramers; dsDNA enters through RuvA and exits via RuvB. An RuvB hexamer assembles on each DNA strand where it exits the tetramer. Each RuvB hexamer is contacted by two RuvA subunits (via domain III) on 2 adjacent RuvB subunits; this complex drives branch migration. In the full resolvosome a probable DNA-RuvA(4)-RuvB(12)-RuvC(2) complex forms which resolves the HJ.

The protein localises to the cytoplasm. It catalyses the reaction ATP + H2O = ADP + phosphate + H(+). In terms of biological role, the RuvA-RuvB-RuvC complex processes Holliday junction (HJ) DNA during genetic recombination and DNA repair, while the RuvA-RuvB complex plays an important role in the rescue of blocked DNA replication forks via replication fork reversal (RFR). RuvA specifically binds to HJ cruciform DNA, conferring on it an open structure. The RuvB hexamer acts as an ATP-dependent pump, pulling dsDNA into and through the RuvAB complex. RuvB forms 2 homohexamers on either side of HJ DNA bound by 1 or 2 RuvA tetramers; 4 subunits per hexamer contact DNA at a time. Coordinated motions by a converter formed by DNA-disengaged RuvB subunits stimulates ATP hydrolysis and nucleotide exchange. Immobilization of the converter enables RuvB to convert the ATP-contained energy into a lever motion, pulling 2 nucleotides of DNA out of the RuvA tetramer per ATP hydrolyzed, thus driving DNA branch migration. The RuvB motors rotate together with the DNA substrate, which together with the progressing nucleotide cycle form the mechanistic basis for DNA recombination by continuous HJ branch migration. Branch migration allows RuvC to scan DNA until it finds its consensus sequence, where it cleaves and resolves cruciform DNA. In Rickettsia rickettsii (strain Sheila Smith), this protein is Holliday junction branch migration complex subunit RuvB.